Reading from the N-terminus, the 908-residue chain is DNA mismatch repair protein MutS (908 aa).

629 to 636 is an ATP binding site; it reads GPNMAGKS. A disordered region spans residues 822-863; the sequence is ADEADGAPSEDPPSEDPPSGDGVRAKKGEADAVPDLEDSQAN.

This sequence belongs to the DNA mismatch repair MutS family.

In terms of biological role, this protein is involved in the repair of mismatches in DNA. It is possible that it carries out the mismatch recognition step. This protein has a weak ATPase activity. The chain is DNA mismatch repair protein MutS from Salinibacter ruber (strain DSM 13855 / M31).